Consider the following 444-residue polypeptide: Homocysteine/cysteine synthase (444 aa).

At lysine 208 the chain carries N6-(pyridoxal phosphate)lysine.

The protein belongs to the trans-sulfuration enzymes family. Homotetramer. Requires pyridoxal 5'-phosphate as cofactor.

Its subcellular location is the cytoplasm. It catalyses the reaction O-acetyl-L-homoserine + methanethiol = L-methionine + acetate + H(+). The enzyme catalyses O-acetyl-L-homoserine + hydrogen sulfide = L-homocysteine + acetate. It carries out the reaction O-acetyl-L-serine + hydrogen sulfide = L-cysteine + acetate. It participates in amino-acid biosynthesis; L-methionine biosynthesis via de novo pathway; L-homocysteine from O-acetyl-L-homoserine. It functions in the pathway amino-acid biosynthesis; L-cysteine biosynthesis; L-cysteine from L-serine: step 2/2. In terms of biological role, catalyzes the conversion of O-acetyl-L-homoserine (OAH) into homocysteine in the methionine biosynthesis pathway. Also catalyzes the conversion of O-acetylserine (OAS) into cysteine, the last step in the cysteine biosynthesis pathway. This is Homocysteine/cysteine synthase (MET17) from Kluyveromyces lactis (strain ATCC 8585 / CBS 2359 / DSM 70799 / NBRC 1267 / NRRL Y-1140 / WM37) (Yeast).